Reading from the N-terminus, the 498-residue chain is ATP synthase subunit beta, chloroplastic (498 aa).

Residue 172 to 179 participates in ATP binding; sequence GGAGVGKT.

It belongs to the ATPase alpha/beta chains family. F-type ATPases have 2 components, CF(1) - the catalytic core - and CF(0) - the membrane proton channel. CF(1) has five subunits: alpha(3), beta(3), gamma(1), delta(1), epsilon(1). CF(0) has four main subunits: a(1), b(1), b'(1) and c(9-12).

It is found in the plastid. It localises to the chloroplast thylakoid membrane. The enzyme catalyses ATP + H2O + 4 H(+)(in) = ADP + phosphate + 5 H(+)(out). In terms of biological role, produces ATP from ADP in the presence of a proton gradient across the membrane. The catalytic sites are hosted primarily by the beta subunits. The polypeptide is ATP synthase subunit beta, chloroplastic (Lemna minor (Common duckweed)).